The primary structure comprises 209 residues: ATP synthase subunit b 2 (209 aa).

A helical transmembrane segment spans residues 9–29 (WWGWVTLSVLVMVAGDGTLAF).

The protein belongs to the ATPase B chain family. F-type ATPases have 2 components, F(1) - the catalytic core - and F(0) - the membrane proton channel. F(1) has five subunits: alpha(3), beta(3), gamma(1), delta(1), epsilon(1). F(0) has three main subunits: a(1), b(2) and c(10-14). The alpha and beta chains form an alternating ring which encloses part of the gamma chain. F(1) is attached to F(0) by a central stalk formed by the gamma and epsilon chains, while a peripheral stalk is formed by the delta and b chains.

Its subcellular location is the cell inner membrane. In terms of biological role, f(1)F(0) ATP synthase produces ATP from ADP in the presence of a proton or sodium gradient. F-type ATPases consist of two structural domains, F(1) containing the extramembraneous catalytic core and F(0) containing the membrane proton channel, linked together by a central stalk and a peripheral stalk. During catalysis, ATP synthesis in the catalytic domain of F(1) is coupled via a rotary mechanism of the central stalk subunits to proton translocation. Functionally, component of the F(0) channel, it forms part of the peripheral stalk, linking F(1) to F(0). This is ATP synthase subunit b 2 from Desulfosudis oleivorans (strain DSM 6200 / JCM 39069 / Hxd3) (Desulfococcus oleovorans).